We begin with the raw amino-acid sequence, 308 residues long: MIIVTGGAGFIGSNIVKALNDLGRKDILVVDNLKDGTKFANLVDLDIADYCDKEDFIASIIAGDEFGDIDAVFHEGACSATTEWDGKYIMHNNYEYSKELLHYCLDREIPFFYASSAATYGDTKVFREEREFEGPLNVYGYSKFLFDQYVRNILPEAKSPVCGFRYFNVYGPRENHKGSMASVAFHLNNQILKGENPKLFAGSEGFRRDFVYVGDVAAVNIWCWQNGISGIYNLGTGNAESFRAVADAVVKFHGKGEIETIPFPEHLKSRYQEYTQADLTKLRSTGYDKPFKTVAEGVTEYMAWLNRK.

NADP(+) is bound by residues 10 to 11, 31 to 32, K38, K53, 75 to 79, and N92; these read FI, DN, and EGACS. The active-site Proton acceptor is Y139. K143 lines the NADP(+) pocket. N168 provides a ligand contact to substrate. Residues V169 and K177 each coordinate NADP(+). K177 functions as the Proton acceptor in the catalytic mechanism. Substrate is bound by residues S179, H186, 200 to 203, R208, and Y271; that span reads FAGS.

It belongs to the NAD(P)-dependent epimerase/dehydratase family. HldD subfamily. Homopentamer. NADP(+) is required as a cofactor.

The enzyme catalyses ADP-D-glycero-beta-D-manno-heptose = ADP-L-glycero-beta-D-manno-heptose. It functions in the pathway nucleotide-sugar biosynthesis; ADP-L-glycero-beta-D-manno-heptose biosynthesis; ADP-L-glycero-beta-D-manno-heptose from D-glycero-beta-D-manno-heptose 7-phosphate: step 4/4. Functionally, catalyzes the interconversion between ADP-D-glycero-beta-D-manno-heptose and ADP-L-glycero-beta-D-manno-heptose via an epimerization at carbon 6 of the heptose. The chain is ADP-L-glycero-D-manno-heptose-6-epimerase from Haemophilus influenzae (strain 86-028NP).